The following is a 1555-amino-acid chain: Probable serine/threonine-protein kinase DDB_G0276181 (1555 aa).

Disordered stretches follow at residues 1–54 (MTSV…NNSF), 138–208 (IIQQ…NSKL), 342–452 (KLKK…DSPF), 486–508 (TTTT…IKPL), and 781–850 (NNIN…NQNT). Low complexity-rich tracts occupy residues 14-53 (NNSG…NNNS), 138-205 (IIQQ…NNNN), 359-378 (SNIA…KING), and 395-431 (NNSQ…SKKP). The 181-residue stretch at 58–238 (QVLHTGYLTK…WIEMIKLAIS (181 aa)) folds into the PH domain. Over residues 437 to 452 (RNISTSDNGSGTDSPF) the composition is skewed to polar residues. 2 stretches are compositionally biased toward low complexity: residues 486 to 504 (TTTT…TNTN) and 781 to 832 (NNIN…NNNN). Polar residues predominate over residues 833 to 850 (GSGLLSSSPLITISNQNT). Residues 986 to 1309 (VVLHERLGTG…TIIHSISKMI (324 aa)) form the Protein kinase domain. An ATP-binding site is contributed by 992-1000 (LGTGATGDI). The interval 1012-1031 (RHISNQDSSGSNSSGSGSGH) is disordered. Lys1061 is an ATP binding site. The active-site Proton acceptor is the Asp1156. Positions 1340–1376 (VQNNNNNSNNNNNNNNNNNNNNSNSNLNNCNNSSPNL) are enriched in low complexity. 2 disordered regions span residues 1340–1383 (VQNN…SANN) and 1457–1480 (KKSS…GSSR).

This sequence belongs to the protein kinase superfamily. TKL Ser/Thr protein kinase family.

It carries out the reaction L-seryl-[protein] + ATP = O-phospho-L-seryl-[protein] + ADP + H(+). The enzyme catalyses L-threonyl-[protein] + ATP = O-phospho-L-threonyl-[protein] + ADP + H(+). The chain is Probable serine/threonine-protein kinase DDB_G0276181 from Dictyostelium discoideum (Social amoeba).